The primary structure comprises 355 residues: Ion-translocating oxidoreductase complex subunit D (355 aa).

A run of 5 helical transmembrane segments spans residues 13–33 (GKLTARIMLWVIFGMLPALAV), 35–55 (VYYFGFGVLIQICLAVALALI), 77–97 (VILTALILAMAIPPYAPYWVI), 98–118 (LIGTFCAVILGKHVYGGLGQN), and 128–148 (VVLLISFPVQMTGWMPPISLL). Thr186 is subject to FMN phosphoryl threonine. 5 helical membrane-spanning segments follow: residues 216–236 (AGLGWLQVNLAFFIGGLFLIW), 245–265 (PVAILLSLGIFCGLFDLFGNA), 267–287 (AVGFFAQLFSGAMMFGAFFIA), 294–314 (PVTPKGKWVFGILIGLLICLI), and 318–338 (GNYPDGVAFAVLLANICVPLI).

This sequence belongs to the NqrB/RnfD family. In terms of assembly, the complex is composed of six subunits: RnfA, RnfB, RnfC, RnfD, RnfE and RnfG. It depends on FMN as a cofactor.

Its subcellular location is the cell inner membrane. Part of a membrane-bound complex that couples electron transfer with translocation of ions across the membrane. The protein is Ion-translocating oxidoreductase complex subunit D of Actinobacillus succinogenes (strain ATCC 55618 / DSM 22257 / CCUG 43843 / 130Z).